Consider the following 383-residue polypeptide: Chaperone protein DnaJ (383 aa).

The J domain occupies 4–68 (DLYETLNVSR…DQRARYDRFG (65 aa)). A CR-type zinc finger spans residues 139-221 (GGEKEITINH…CSGRGRNQKQ (83 aa)). 8 residues coordinate Zn(2+): Cys152, Cys155, Cys169, Cys172, Cys195, Cys198, Cys209, and Cys212. CXXCXGXG motif repeat units follow at residues 152 to 159 (CETCRGSG), 169 to 176 (CRNCGGQG), 195 to 202 (CPNCQGTG), and 209 to 216 (CPTCSGRG).

It belongs to the DnaJ family. In terms of assembly, homodimer. Zn(2+) serves as cofactor.

The protein resides in the cytoplasm. Participates actively in the response to hyperosmotic and heat shock by preventing the aggregation of stress-denatured proteins and by disaggregating proteins, also in an autonomous, DnaK-independent fashion. Unfolded proteins bind initially to DnaJ; upon interaction with the DnaJ-bound protein, DnaK hydrolyzes its bound ATP, resulting in the formation of a stable complex. GrpE releases ADP from DnaK; ATP binding to DnaK triggers the release of the substrate protein, thus completing the reaction cycle. Several rounds of ATP-dependent interactions between DnaJ, DnaK and GrpE are required for fully efficient folding. Also involved, together with DnaK and GrpE, in the DNA replication of plasmids through activation of initiation proteins. This is Chaperone protein DnaJ from Gloeobacter violaceus (strain ATCC 29082 / PCC 7421).